A 180-amino-acid chain; its full sequence is ATP synthase subunit b 2 (180 aa).

The chain crosses the membrane as a helical span at residues Ile33 to Pro53.

This sequence belongs to the ATPase B chain family. As to quaternary structure, F-type ATPases have 2 components, F(1) - the catalytic core - and F(0) - the membrane proton channel. F(1) has five subunits: alpha(3), beta(3), gamma(1), delta(1), epsilon(1). F(0) has three main subunits: a(1), b(2) and c(10-14). The alpha and beta chains form an alternating ring which encloses part of the gamma chain. F(1) is attached to F(0) by a central stalk formed by the gamma and epsilon chains, while a peripheral stalk is formed by the delta and b chains.

The protein localises to the cell inner membrane. Its function is as follows. F(1)F(0) ATP synthase produces ATP from ADP in the presence of a proton or sodium gradient. F-type ATPases consist of two structural domains, F(1) containing the extramembraneous catalytic core and F(0) containing the membrane proton channel, linked together by a central stalk and a peripheral stalk. During catalysis, ATP synthesis in the catalytic domain of F(1) is coupled via a rotary mechanism of the central stalk subunits to proton translocation. Functionally, component of the F(0) channel, it forms part of the peripheral stalk, linking F(1) to F(0). The b'-subunit is a diverged and duplicated form of b found in plants and photosynthetic bacteria. The polypeptide is ATP synthase subunit b 2 (atpF2) (Cereibacter sphaeroides (strain ATCC 17029 / ATH 2.4.9) (Rhodobacter sphaeroides)).